The sequence spans 602 residues: UPF0329 protein ECU02_0060 (602 aa).

Basic and acidic residues predominate over residues 313–345 (EEDERKRAEAESARNREELLRMEEREKGKEKGS). Residues 313 to 407 (EEDERKRAEA…SPKEESKGEE (95 aa)) are disordered. Positions 346-356 (KGKGRKKRGKK) are enriched in basic residues. A compositionally biased stretch (basic and acidic residues) spans 357-369 (GAGEAKEESKEED). The segment covering 370–384 (RGGEEEESVEADVPV) has biased composition (acidic residues).

It belongs to the UPF0329 family.

The polypeptide is UPF0329 protein ECU02_0060 (Encephalitozoon cuniculi (strain GB-M1) (Microsporidian parasite)).